The chain runs to 861 residues: DNA mismatch repair protein MutS (861 aa).

ATP is bound at residue 614-621 (GPNMGGKS).

Belongs to the DNA mismatch repair MutS family.

This protein is involved in the repair of mismatches in DNA. It is possible that it carries out the mismatch recognition step. This protein has a weak ATPase activity. This Mannheimia succiniciproducens (strain KCTC 0769BP / MBEL55E) protein is DNA mismatch repair protein MutS.